Here is a 201-residue protein sequence, read N- to C-terminus: Ribosome maturation factor RimM (201 aa).

The PRC barrel domain maps to 94–168; it reads EDEYYHADLI…RLVADPPLGL (75 aa). The tract at residues 164–201 is disordered; sequence PPLGLLDDTRPPAGVEGEVEEDPGVGIDEDGDGKGGAS. A compositionally biased stretch (acidic residues) spans 180-194; it reads GEVEEDPGVGIDEDG.

Belongs to the RimM family. As to quaternary structure, binds ribosomal protein uS19.

It is found in the cytoplasm. Functionally, an accessory protein needed during the final step in the assembly of 30S ribosomal subunit, possibly for assembly of the head region. Essential for efficient processing of 16S rRNA. May be needed both before and after RbfA during the maturation of 16S rRNA. It has affinity for free ribosomal 30S subunits but not for 70S ribosomes. This is Ribosome maturation factor RimM from Rhodospirillum rubrum (strain ATCC 11170 / ATH 1.1.1 / DSM 467 / LMG 4362 / NCIMB 8255 / S1).